We begin with the raw amino-acid sequence, 84 residues long: Cell division topological specificity factor (84 aa).

The protein belongs to the MinE family.

Functionally, prevents the cell division inhibition by proteins MinC and MinD at internal division sites while permitting inhibition at polar sites. This ensures cell division at the proper site by restricting the formation of a division septum at the midpoint of the long axis of the cell. This is Cell division topological specificity factor from Paraburkholderia xenovorans (strain LB400).